We begin with the raw amino-acid sequence, 1774 residues long: U3 small nucleolar RNA-associated protein 10 (1774 aa).

Positions 1206 to 1226 are disordered; sequence YDKHSSAGSNDEEAGSESEAE. Residues 1215–1226 show a composition bias toward acidic residues; that stretch reads NDEEAGSESEAE. The stretch at 1734–1772 is one HEAT repeat; sequence LVPIIAELLEDEDEEVEYEVRSGLVKVVESVMGEPFDRY.

The protein belongs to the HEATR1/UTP10 family. In terms of assembly, component of the ribosomal small subunit (SSU) processome.

The protein localises to the nucleus. It is found in the nucleolus. Its function is as follows. Involved in nucleolar processing of pre-18S ribosomal RNA. Involved in ribosome biosynthesis. The protein is U3 small nucleolar RNA-associated protein 10 of Kluyveromyces lactis (strain ATCC 8585 / CBS 2359 / DSM 70799 / NBRC 1267 / NRRL Y-1140 / WM37) (Yeast).